Here is an 86-residue protein sequence, read N- to C-terminus: Serine protease inhibitor Kazal-type 9 (86 aa).

A signal peptide spans 1 to 19 (MRATAIVLLLALTLATMFS). One can recognise a Kazal-like domain in the interval 26 to 86 (TKQMVDCSHY…TLKFVHFGKC (61 aa)). Cystine bridges form between Cys32-Cys68, Cys46-Cys65, and Cys54-Cys86.

As to quaternary structure, dimer. Interacts with KLK5 and KLK8. In terms of tissue distribution, skin. Highly expressed at sites of hyperkeratosis. Also detected in thymus, tonsils, testis, pancreas, liver, placenta and brain. Expressed at stratum granulosum and stratum corneum at palmar and plantar sites (at protein level).

The protein resides in the secreted. Functionally, serine protease inhibitor which specifically inhibits KLK5. May contribute to the regulation of the desquamation process in skin by inhibiting KLK5. The protein is Serine protease inhibitor Kazal-type 9 (SPINK9) of Homo sapiens (Human).